The sequence spans 615 residues: uncharacterized protein (615 aa).

3 stretches are compositionally biased toward polar residues: residues 1 to 11, 41 to 55, and 128 to 140; these read MSETSSNSPAS, LSQN…SSKV, and TSGS…NAPP. 2 disordered regions span residues 1 to 61 and 97 to 149; these read MSET…QALV and HQNH…KASS. A phosphoserine mark is found at S149 and S152. A disordered region spans residues 181 to 217; sequence LIHPEQTDRGLPYAPDEKFHNSGSLKLPKGASLEDLS. A phosphoserine mark is found at S219 and S275. Disordered regions lie at residues 266-481, 493-565, and 586-615; these read KPLA…KFTG, RLQK…KPSF, and GVET…TEEQ. Residues 272–283 are compositionally biased toward polar residues; sequence RQRSTADLTESD. A phosphothreonine mark is found at T276 and T297. Positions 312–323 are enriched in basic and acidic residues; it reads EAEKGFYTKDGE. A compositionally biased stretch (low complexity) spans 356 to 376; it reads PSLSSASQPSAASSSSSSEPS. Residues 505–522 are compositionally biased toward polar residues; that stretch reads PNKSKSPSGTKSPASGET. Position 514 is a phosphothreonine (T514). Phosphoserine is present on S516. Residues 586–599 show a composition bias toward basic and acidic residues; the sequence is GVETRKEVEPKEEA. Positions 600 to 615 are enriched in acidic residues; the sequence is VIPEEDVEVEVETEEQ.

This is an uncharacterized protein from Schizosaccharomyces pombe (strain 972 / ATCC 24843) (Fission yeast).